The chain runs to 60 residues: DNA-binding protein 7c (60 aa).

A disordered region spans residues Asp37 to Lys60. Positions Val46–Lys60 are enriched in basic and acidic residues.

Belongs to the 7 kDa DNA-binding/endoribonuclease P2 family. Monomer.

The protein localises to the cytoplasm. Can constrain negative DNA supercoils. May be involved in maintaining the integrity of the genome at high temperature. This is DNA-binding protein 7c from Acidianus hospitalis (strain W1).